Consider the following 1396-residue polypeptide: G2/mitotic-specific cyclin-B3 (1396 aa).

3 disordered regions span residues 1–64 (MPPP…TNAS), 259–398 (KEKP…PQME), and 477–500 (TTEK…PGEL). Positions 10-34 (SKLETEKAQSNKITPREEQQSEKIG) are enriched in basic and acidic residues. A D-box motif is present at residues 54-62 (RSVFEDVTN). Positions 264 to 273 (VKKPHFRKKK) are enriched in basic residues. Residues 306–315 (LQENTNNKDA) are compositionally biased toward polar residues. The residue at position 703 (Ser703) is a Phosphoserine. The disordered stretch occupies residues 775 to 796 (VDEPLSHQSPHIQNHSDTTKEA). Residues 780–790 (SHQSPHIQNHS) are compositionally biased toward polar residues.

This sequence belongs to the cyclin family. Cyclin AB subfamily. Interacts with CDK2 kinase. In terms of processing, ubiquitinated. Ubiquitination leads to its degradation during anaphase entry, after degradation of CCNB1. As to expression, expressed in testis. Also expressed in the fetal ovary, but not in the adult.

It localises to the nucleus. In terms of biological role, cyclins are positive regulatory subunits of the cyclin-dependent kinases (CDKs), and thereby play an essential role in the control of the cell cycle, notably via their destruction during cell division. Its tissue specificity suggest that it may be required during early meiotic prophase I. The protein is G2/mitotic-specific cyclin-B3 (Ccnb3) of Mus musculus (Mouse).